Here is a 318-residue protein sequence, read N- to C-terminus: NADH-ubiquinone oxidoreductase chain 1 (318 aa).

Helical transmembrane passes span 3 to 23, 70 to 90, 100 to 120, 146 to 166, 171 to 191, 231 to 251, 254 to 273, and 294 to 314; these read FINI…LTLV, LFII…IPLP, LGML…LWSG, MAII…QMLI, HIWL…STLA, IILM…HINY, LYST…FLWI, and LPLT…LAGI.

The protein belongs to the complex I subunit 1 family. As to quaternary structure, core subunit of respiratory chain NADH dehydrogenase (Complex I) which is composed of 45 different subunits.

The protein localises to the mitochondrion inner membrane. The catalysed reaction is a ubiquinone + NADH + 5 H(+)(in) = a ubiquinol + NAD(+) + 4 H(+)(out). Its function is as follows. Core subunit of the mitochondrial membrane respiratory chain NADH dehydrogenase (Complex I) which catalyzes electron transfer from NADH through the respiratory chain, using ubiquinone as an electron acceptor. Essential for the catalytic activity and assembly of complex I. The chain is NADH-ubiquinone oxidoreductase chain 1 from Rattus norvegicus (Rat).